We begin with the raw amino-acid sequence, 108 residues long: Small ribosomal subunit protein bS18 (108 aa).

A compositionally biased stretch (polar residues) spans 1–12 (MSDITKQPANNI). Positions 1-33 (MSDITKQPANNISSDDKKEVAKASAKSSVEGAK) are disordered.

The protein belongs to the bacterial ribosomal protein bS18 family. As to quaternary structure, part of the 30S ribosomal subunit. Forms a tight heterodimer with protein bS6.

Functionally, binds as a heterodimer with protein bS6 to the central domain of the 16S rRNA, where it helps stabilize the platform of the 30S subunit. The protein is Small ribosomal subunit protein bS18 of Mycoplasmoides gallisepticum (strain R(low / passage 15 / clone 2)) (Mycoplasma gallisepticum).